Consider the following 291-residue polypeptide: MQSSTAHPSRLALYARLVRIDKPIGTLLLLWPTLWAMWMAADGHPPPALVAIFVVGTVLMRSAGCAINDWADRDFDKHVKRTRERPLTAGLIAPWEALAVAAVLALVAFTLILPLNALTKWLSVAAVLIAGTYPFFKRFFAIPQAYLGIAFGFGIPMAYAAVQDQVPAPAWLMLAANVLWAIAYDTAYAMVDRDDDLLIGIQTSAITFGRFDVAAIMLCYAGFFGIMAWVGHALALGAAYWIGLAAAAALAGYYYTLLRTRDRMQCFFVFRHNNWFGACVFVGAALAYALR.

The next 8 helical transmembrane spans lie at 23 to 43, 47 to 67, 98 to 118, 139 to 159, 171 to 191, 216 to 236, 238 to 258, and 267 to 287; these read PIGT…AADG, PALV…GCAI, LAVA…LNAL, FFAI…PMAY, WLML…YAMV, IMLC…ALAL, AAYW…YTLL, and FFVF…AALA.

This sequence belongs to the UbiA prenyltransferase family. Mg(2+) is required as a cofactor.

It is found in the cell inner membrane. It carries out the reaction all-trans-octaprenyl diphosphate + 4-hydroxybenzoate = 4-hydroxy-3-(all-trans-octaprenyl)benzoate + diphosphate. It participates in cofactor biosynthesis; ubiquinone biosynthesis. Catalyzes the prenylation of para-hydroxybenzoate (PHB) with an all-trans polyprenyl group. Mediates the second step in the final reaction sequence of ubiquinone-8 (UQ-8) biosynthesis, which is the condensation of the polyisoprenoid side chain with PHB, generating the first membrane-bound Q intermediate 3-octaprenyl-4-hydroxybenzoate. The sequence is that of 4-hydroxybenzoate octaprenyltransferase from Ralstonia nicotianae (strain ATCC BAA-1114 / GMI1000) (Ralstonia solanacearum).